The following is a 678-amino-acid chain: RNA helicase NPH-II (678 aa).

Residues 175–351 enclose the Helicase ATP-binding domain; it reads FESWIHHVPV…EFFTESVFVH (177 aa). Position 188–195 (188–195) interacts with ATP; that stretch reads GDTGVGKT. Residues 300-303 carry the DEXH box motif; sequence DEVH. The region spanning 371–546 is the Helicase C-terminal domain; the sequence is SLNKFMYIEE…VFDLQLPEDL (176 aa).

Belongs to the DEAD box helicase family. DEAH subfamily. Monomer.

Its subcellular location is the virion. The enzyme catalyses ATP + H2O = ADP + phosphate + H(+). NTP-dependent helicase that catalyzes unidirectional unwinding of 3'tailed duplex RNAs and plays an important role during transcription of early mRNAs, presumably by preventing R-loop formation behind the elongating RNA polymerase. Might also play a role in the export of newly synthesized mRNA chains out of the core into the cytoplasm. Required for replication and propagation of viral particles. In Oryctolagus cuniculus (Rabbit), this protein is RNA helicase NPH-II (OPG084).